The chain runs to 612 residues: Capsid protein (612 aa).

Residues 1 to 53 (MDANVQIRPARNNPSQGNQGRNNNNKRRRRRRGLKLPPVVAPITSPGQMAEPA) form a disordered region. Positions 11–23 (RNNPSQGNQGRNN) are enriched in low complexity. Positions 24 to 34 (NNKRRRRRRGL) are enriched in basic residues.

It belongs to the tetravirus capsid protein family.

The protein resides in the virion. Its function is as follows. Self-assembles to form an icosahedral capsid with a T=4 symmetry, about 35 nm in diameter, and consisting of 240 copies of the two structural proteins. The chain is Capsid protein from Nudaurelia capensis beta virus (isolate Pine emperor moth/South Africa) (NbetaV).